Consider the following 529-residue polypeptide: tRNA-2-methylthio-N(6)-dimethylallyladenosine synthase 1 (529 aa).

The disordered stretch occupies residues 1 to 21; that stretch reads MTQDHIVTERPPATRNDTAGN. One can recognise an MTTase N-terminal domain in the interval 25–141; it reads RTYEVRTLGC…LPVLLERSRH (117 aa). Positions 34, 70, 104, 178, 182, and 185 each coordinate [4Fe-4S] cluster. In terms of domain architecture, Radical SAM core spans 164-407; that stretch reads RDSAYAAWVS…VALQERISLE (244 aa). One can recognise a TRAM domain in the interval 410–480; it reads RSLVGTRQEL…PHHLIADGPL (71 aa). Positions 481-504 are disordered; sequence LQHRRTPAGDASERGQTPTTRGVG.

Belongs to the methylthiotransferase family. MiaB subfamily. Monomer. [4Fe-4S] cluster serves as cofactor.

The protein localises to the cytoplasm. It catalyses the reaction N(6)-dimethylallyladenosine(37) in tRNA + (sulfur carrier)-SH + AH2 + 2 S-adenosyl-L-methionine = 2-methylsulfanyl-N(6)-dimethylallyladenosine(37) in tRNA + (sulfur carrier)-H + 5'-deoxyadenosine + L-methionine + A + S-adenosyl-L-homocysteine + 2 H(+). Functionally, catalyzes the methylthiolation of N6-(dimethylallyl)adenosine (i(6)A), leading to the formation of 2-methylthio-N6-(dimethylallyl)adenosine (ms(2)i(6)A) at position 37 in tRNAs that read codons beginning with uridine. The sequence is that of tRNA-2-methylthio-N(6)-dimethylallyladenosine synthase 1 from Mycobacterium marinum (strain ATCC BAA-535 / M).